We begin with the raw amino-acid sequence, 660 residues long: Acetyl-coenzyme A synthetase (660 aa).

Residues 197-200 and T317 contribute to the CoA site; that span reads RGGK. ATP is bound by residues 397-399, 421-426, D512, and R528; these read GEP and DTWWQT. Position 536 (S536) interacts with CoA. R539 is an ATP binding site. Mg(2+)-binding residues include V550, H552, and V555. Position 625 is an N6-acetyllysine (K625).

This sequence belongs to the ATP-dependent AMP-binding enzyme family. Mg(2+) is required as a cofactor. In terms of processing, acetylated. Deacetylation by the SIR2-homolog deacetylase activates the enzyme.

It carries out the reaction acetate + ATP + CoA = acetyl-CoA + AMP + diphosphate. In terms of biological role, catalyzes the conversion of acetate into acetyl-CoA (AcCoA), an essential intermediate at the junction of anabolic and catabolic pathways. AcsA undergoes a two-step reaction. In the first half reaction, AcsA combines acetate with ATP to form acetyl-adenylate (AcAMP) intermediate. In the second half reaction, it can then transfer the acetyl group from AcAMP to the sulfhydryl group of CoA, forming the product AcCoA. This Burkholderia thailandensis (strain ATCC 700388 / DSM 13276 / CCUG 48851 / CIP 106301 / E264) protein is Acetyl-coenzyme A synthetase.